We begin with the raw amino-acid sequence, 328 residues long: Malate dehydrogenase (328 aa).

12–18 contacts NAD(+); that stretch reads GAAGQIG. Substrate-binding residues include R95 and R101. Residues N108, Q115, and 132–134 each bind NAD(+); that span reads VGN. The substrate site is built by N134 and R165. The active-site Proton acceptor is H190.

The protein belongs to the LDH/MDH superfamily. MDH type 2 family.

It catalyses the reaction (S)-malate + NAD(+) = oxaloacetate + NADH + H(+). Catalyzes the reversible oxidation of malate to oxaloacetate. The sequence is that of Malate dehydrogenase from Leptothrix cholodnii (strain ATCC 51168 / LMG 8142 / SP-6) (Leptothrix discophora (strain SP-6)).